Here is a 264-residue protein sequence, read N- to C-terminus: Thymidylate synthase (264 aa).

A dUMP-binding site is contributed by arginine 21. (6R)-5,10-methylene-5,6,7,8-tetrahydrofolate is bound at residue histidine 51. 126–127 provides a ligand contact to dUMP; it reads RR. Cysteine 146 serves as the catalytic Nucleophile. Residues 166–169, asparagine 177, and 207–209 each bind dUMP; these read RSGD and HLY. Aspartate 169 contacts (6R)-5,10-methylene-5,6,7,8-tetrahydrofolate. Alanine 263 serves as a coordination point for (6R)-5,10-methylene-5,6,7,8-tetrahydrofolate.

Belongs to the thymidylate synthase family. Bacterial-type ThyA subfamily. In terms of assembly, homodimer.

The protein resides in the cytoplasm. The catalysed reaction is dUMP + (6R)-5,10-methylene-5,6,7,8-tetrahydrofolate = 7,8-dihydrofolate + dTMP. It participates in pyrimidine metabolism; dTTP biosynthesis. Its function is as follows. Catalyzes the reductive methylation of 2'-deoxyuridine-5'-monophosphate (dUMP) to 2'-deoxythymidine-5'-monophosphate (dTMP) while utilizing 5,10-methylenetetrahydrofolate (mTHF) as the methyl donor and reductant in the reaction, yielding dihydrofolate (DHF) as a by-product. This enzymatic reaction provides an intracellular de novo source of dTMP, an essential precursor for DNA biosynthesis. This is Thymidylate synthase from Brevibacillus brevis (strain 47 / JCM 6285 / NBRC 100599).